A 100-amino-acid chain; its full sequence is Urease subunit gamma (100 aa).

It belongs to the urease gamma subunit family. As to quaternary structure, heterotrimer of UreA (gamma), UreB (beta) and UreC (alpha) subunits. Three heterotrimers associate to form the active enzyme.

Its subcellular location is the cytoplasm. The enzyme catalyses urea + 2 H2O + H(+) = hydrogencarbonate + 2 NH4(+). Its pathway is nitrogen metabolism; urea degradation; CO(2) and NH(3) from urea (urease route): step 1/1. This chain is Urease subunit gamma, found in Bordetella pertussis (strain Tohama I / ATCC BAA-589 / NCTC 13251).